A 412-amino-acid polypeptide reads, in one-letter code: Intraflagellar transport protein che-13 (412 aa).

2 disordered regions span residues 1–21 (MEEE…GSAI) and 162–193 (PPKE…NFLD). The segment covering 165–193 (EEDEDTAVDEQDEDDDNDDIVEEPMNFLD) has biased composition (acidic residues). Positions 302-393 (QLASMMSKFR…VQIGVFEQSI (92 aa)) form a coiled coil.

This sequence belongs to the IFT57 family. In terms of assembly, component of the IFT complex B composed of at least che-2, che-13, dyf-1, dyf-3, dyf-6, dyf-11, dyf-13, ift-20, ift-74, ift-81, ifta-2, osm-1, osm-5 and osm-6.

Its subcellular location is the cytoplasm. The protein localises to the cytoskeleton. It localises to the cilium axoneme. In terms of biological role, component of the intraflagellar transport (IFT) complex B required for transport of proteins in the motile cilium. May be required for ciliary entrance and transport of specific ciliary cargo proteins such as che-3 which are related to motility. Required for the formation of chemosensory cilia that detect chemosensory cues. The chain is Intraflagellar transport protein che-13 from Caenorhabditis elegans.